The primary structure comprises 456 residues: tRNA modification GTPase MnmE (456 aa).

(6S)-5-formyl-5,6,7,8-tetrahydrofolate contacts are provided by R23, E80, and K122. Residues 218-380 (AKRIVIVGPP…LKKHLSNRQK (163 aa)) form the TrmE-type G domain. Residue N228 participates in K(+) binding. GTP is bound by residues 228 to 233 (NAGKSS), 247 to 253 (TDLPGTT), and 272 to 275 (DTAG). Residue S232 coordinates Mg(2+). 3 residues coordinate K(+): T247, L249, and T252. Mg(2+) is bound at residue T253. K456 provides a ligand contact to (6S)-5-formyl-5,6,7,8-tetrahydrofolate.

It belongs to the TRAFAC class TrmE-Era-EngA-EngB-Septin-like GTPase superfamily. TrmE GTPase family. In terms of assembly, homodimer. Heterotetramer of two MnmE and two MnmG subunits. The cofactor is K(+).

It localises to the cytoplasm. Its function is as follows. Exhibits a very high intrinsic GTPase hydrolysis rate. Involved in the addition of a carboxymethylaminomethyl (cmnm) group at the wobble position (U34) of certain tRNAs, forming tRNA-cmnm(5)s(2)U34. The chain is tRNA modification GTPase MnmE from Buchnera aphidicola subsp. Schizaphis graminum (strain Sg).